The primary structure comprises 32 residues: Ranatuerin-2Lb (32 aa).

Cys27 and Cys32 form a disulfide bridge.

Expressed by the skin glands.

It is found in the secreted. Antibacterial activity against Gram-positive bacterium S.aureus and Gram-negative bacterium E.coli. Has activity against C.albicans. The sequence is that of Ranatuerin-2Lb from Rana luteiventris (Columbia spotted frog).